Consider the following 222-residue polypeptide: Glutathione S-transferase A3 (222 aa).

Alanine 2 carries the N-acetylalanine modification. A GST N-terminal domain is found at 3 to 83; that stretch reads GKPKLHYFNG…YIASKYNLYG (81 aa). The residue at position 4 (lysine 4) is an N6-succinyllysine. Glutathione-binding positions include tyrosine 9, arginine 45, 54–55, and 67–68; these read QV and QT. The region spanning 85-207 is the GST C-terminal domain; sequence DIKERALIDM…LQPGSPRKPP (123 aa).

This sequence belongs to the GST superfamily. Alpha family. Homodimer.

Its subcellular location is the cytoplasm. The enzyme catalyses RX + glutathione = an S-substituted glutathione + a halide anion + H(+). The catalysed reaction is androst-5-ene-3,17-dione = androst-4-ene-3,17-dione. It catalyses the reaction pregn-5-ene-3,20-dione = progesterone. Functionally, conjugation of reduced glutathione to a wide number of exogenous and endogenous hydrophobic electrophiles. Catalyzes isomerization reactions that contribute to the biosynthesis of steroid hormones. Efficiently catalyze obligatory double-bond isomerizations of delta(5)-androstene-3,17-dione and delta(5)-pregnene-3,20-dione, precursors to testosterone and progesterone, respectively. Has substantial activity toward aflatoxin B1-8,9-epoxide. This chain is Glutathione S-transferase A3, found in Homo sapiens (Human).